Consider the following 189-residue polypeptide: UPF0301 protein PputGB1_5045 (189 aa).

Belongs to the UPF0301 (AlgH) family.

This Pseudomonas putida (strain GB-1) protein is UPF0301 protein PputGB1_5045.